Here is a 350-residue protein sequence, read N- to C-terminus: MSTLLIDLKGKELEQEEVELLSHPLVAGLILFTRNFEDREQIQELIRSVRQRVKKPLLITVDQEGGRVQRFRDGFTMLPSMQAFQETLSATEQVSFAKEAGWQMAAEMIALDIDLSFAPVLDLGHECRAIGDRSFSSDVKSAVNLAINFIDGMHQAGMASTGKHFPGHGHVLADSHLETPYDDRTKDEIFGCDLQPFQQLIAQNKLDAIMPAHVIYSQCDSQPASGSEYWLKEILRKKLNFQGTIFSDDLGMKGAGVMGNFVERSKKALNAGCDLLLLCNEREGVIQVVDNLKLAKNQPHFMARQARLQNLFKRRVIDWNDLVSDLRWKLNYRNLADIQIRWLDIQAAKK.

Substrate is bound by residues aspartate 62, arginine 70, arginine 133, and 163–164 (KH). Histidine 176 serves as the catalytic Proton donor/acceptor. Aspartate 248 serves as the catalytic Nucleophile.

Belongs to the glycosyl hydrolase 3 family. NagZ subfamily.

Its subcellular location is the cytoplasm. The enzyme catalyses Hydrolysis of terminal non-reducing N-acetyl-D-hexosamine residues in N-acetyl-beta-D-hexosaminides.. It functions in the pathway cell wall biogenesis; peptidoglycan recycling. Functionally, plays a role in peptidoglycan recycling by cleaving the terminal beta-1,4-linked N-acetylglucosamine (GlcNAc) from peptide-linked peptidoglycan fragments, giving rise to free GlcNAc, anhydro-N-acetylmuramic acid and anhydro-N-acetylmuramic acid-linked peptides. This Haemophilus influenzae (strain PittEE) protein is Beta-hexosaminidase.